The sequence spans 513 residues: Arabinoxylan arabinofuranohydrolase (513 aa).

Residues 1–26 (MRKKCSVCLWILVLLLSCLSGKSAYA) form the signal peptide. Asp50 acts as the Proton acceptor in catalysis. The active-site Proton donor is Glu251. Asn314 is a binding site for substrate. The CBM6 domain maps to 382 to 511 (NRVEAETFAW…LFNFDYWQFT (130 aa)). The Ca(2+) site is built by Glu385, Glu387, Asn409, Gln410, and Asp506.

The protein resides in the secreted. The enzyme catalyses Hydrolysis of terminal non-reducing alpha-L-arabinofuranoside residues in alpha-L-arabinosides.. It functions in the pathway glycan degradation; xylan degradation. Its function is as follows. Cleaves arabinose units from O-2- or O-3-monosubstituted xylose residues, thereby assisting in arabinoxylan (AX) and short-chain arabinoxylo-oligosaccharide (AXOS) degradation. Is more active on wheat bran AXOS than on wheat water-extractable AX and rye water-extractable AX. Does not display endoxylanase, xylosidase or arabinanase activity. The protein is Arabinoxylan arabinofuranohydrolase (xynD) of Bacillus subtilis (strain 168).